The primary structure comprises 88 residues: Large ribosomal subunit protein bL27 (88 aa).

Residues 1-25 (MAHKKAGGSSRNGRDSPGQRRGIKR) are disordered.

Belongs to the bacterial ribosomal protein bL27 family.

The protein is Large ribosomal subunit protein bL27 (rpmA) of Lawsonia intracellularis.